We begin with the raw amino-acid sequence, 102 residues long: Large ribosomal subunit protein bL21 (102 aa).

It belongs to the bacterial ribosomal protein bL21 family. Part of the 50S ribosomal subunit. Contacts protein L20.

Its function is as follows. This protein binds to 23S rRNA in the presence of protein L20. The protein is Large ribosomal subunit protein bL21 of Nitratidesulfovibrio vulgaris (strain DSM 19637 / Miyazaki F) (Desulfovibrio vulgaris).